A 259-amino-acid polypeptide reads, in one-letter code: Phosphate import ATP-binding protein PstB 1 (259 aa).

The region spanning valine 7–isoleucine 254 is the ABC transporter domain. Residue glycine 45 to serine 52 coordinates ATP.

The protein belongs to the ABC transporter superfamily. Phosphate importer (TC 3.A.1.7) family. The complex is composed of two ATP-binding proteins (PstB), two transmembrane proteins (PstC and PstA) and a solute-binding protein (PstS).

The protein resides in the cell membrane. The enzyme catalyses phosphate(out) + ATP + H2O = ADP + 2 phosphate(in) + H(+). In terms of biological role, part of the ABC transporter complex PstSACB involved in phosphate import. Responsible for energy coupling to the transport system. The protein is Phosphate import ATP-binding protein PstB 1 of Bacillus licheniformis (strain ATCC 14580 / DSM 13 / JCM 2505 / CCUG 7422 / NBRC 12200 / NCIMB 9375 / NCTC 10341 / NRRL NRS-1264 / Gibson 46).